Consider the following 524-residue polypeptide: Na(+)/H(+) antiporter NhaB (524 aa).

9 consecutive transmembrane segments (helical) span residues 13 to 33, 98 to 118, 140 to 160, 239 to 259, 304 to 324, 325 to 345, 358 to 378, 448 to 468, and 479 to 499; these read FLGN…IINP, LLLV…LFVF, AFLS…SVSV, FFIR…LVCL, AIIG…VGLV, GLSV…HSLG, LTVF…TPII, ATPN…APLI, and ALPY…FLLV.

This sequence belongs to the NhaB Na(+)/H(+) (TC 2.A.34) antiporter family.

It localises to the cell inner membrane. It catalyses the reaction 2 Na(+)(in) + 3 H(+)(out) = 2 Na(+)(out) + 3 H(+)(in). Functionally, na(+)/H(+) antiporter that extrudes sodium in exchange for external protons. The sequence is that of Na(+)/H(+) antiporter NhaB from Yersinia pestis (strain Pestoides F).